The chain runs to 446 residues: Phosphoglucosamine mutase (446 aa).

Serine 102 serves as the catalytic Phosphoserine intermediate. Serine 102, aspartate 241, aspartate 243, and aspartate 245 together coordinate Mg(2+). The residue at position 102 (serine 102) is a Phosphoserine.

This sequence belongs to the phosphohexose mutase family. The cofactor is Mg(2+). Post-translationally, activated by phosphorylation.

The catalysed reaction is alpha-D-glucosamine 1-phosphate = D-glucosamine 6-phosphate. Its function is as follows. Catalyzes the conversion of glucosamine-6-phosphate to glucosamine-1-phosphate. This Yersinia enterocolitica serotype O:8 / biotype 1B (strain NCTC 13174 / 8081) protein is Phosphoglucosamine mutase.